The following is a 211-amino-acid chain: Large ribosomal subunit protein uL3 (211 aa).

The segment at 122-157 (NQKRNNFGRGPMSHGSKNHRAPGSIGAGTTPGRVYP) is disordered.

The protein belongs to the universal ribosomal protein uL3 family. In terms of assembly, part of the 50S ribosomal subunit. Forms a cluster with proteins L14 and L19.

Its function is as follows. One of the primary rRNA binding proteins, it binds directly near the 3'-end of the 23S rRNA, where it nucleates assembly of the 50S subunit. This is Large ribosomal subunit protein uL3 from Trichormus variabilis (strain ATCC 29413 / PCC 7937) (Anabaena variabilis).